Here is a 144-residue protein sequence, read N- to C-terminus: MLMPKRVKYRREHRGKMRGRAKGGTEIAFGEFGLQALAASWITNRQIEAARRAMTRHMKRGGKVWIKIFPSKPYTAKPLEVRMGSGKGAPEGWVAVVKPGKIMFEIAGVSEEVAREALRLAAHKLPVKCKFVKREENGGESNEN.

This sequence belongs to the universal ribosomal protein uL16 family. Part of the 50S ribosomal subunit.

Its function is as follows. Binds 23S rRNA and is also seen to make contacts with the A and possibly P site tRNAs. The sequence is that of Large ribosomal subunit protein uL16 from Bacillus mycoides (strain KBAB4) (Bacillus weihenstephanensis).